We begin with the raw amino-acid sequence, 598 residues long: Arginine--tRNA ligase (598 aa).

The 'HIGH' region signature appears at 139 to 149 (ANPTGPMHVGH).

Belongs to the class-I aminoacyl-tRNA synthetase family. As to quaternary structure, monomer.

It localises to the cytoplasm. The enzyme catalyses tRNA(Arg) + L-arginine + ATP = L-arginyl-tRNA(Arg) + AMP + diphosphate. This chain is Arginine--tRNA ligase, found in Bradyrhizobium sp. (strain ORS 278).